Here is a 356-residue protein sequence, read N- to C-terminus: 3-dehydroquinate synthase (356 aa).

NAD(+)-binding positions include 101–105, 125–126, K138, and K147; these read GVIGD and TT. Zn(2+) contacts are provided by E180, H243, and H260.

This sequence belongs to the sugar phosphate cyclases superfamily. Dehydroquinate synthase family. Requires Co(2+) as cofactor. The cofactor is Zn(2+). NAD(+) is required as a cofactor.

Its subcellular location is the cytoplasm. It carries out the reaction 7-phospho-2-dehydro-3-deoxy-D-arabino-heptonate = 3-dehydroquinate + phosphate. Its pathway is metabolic intermediate biosynthesis; chorismate biosynthesis; chorismate from D-erythrose 4-phosphate and phosphoenolpyruvate: step 2/7. Functionally, catalyzes the conversion of 3-deoxy-D-arabino-heptulosonate 7-phosphate (DAHP) to dehydroquinate (DHQ). In Alkaliphilus metalliredigens (strain QYMF), this protein is 3-dehydroquinate synthase.